A 208-amino-acid chain; its full sequence is FMN-dependent NADH:quinone oxidoreductase 2 (208 aa).

Belongs to the azoreductase type 1 family. In terms of assembly, homodimer. FMN is required as a cofactor.

The enzyme catalyses 2 a quinone + NADH + H(+) = 2 a 1,4-benzosemiquinone + NAD(+). It catalyses the reaction N,N-dimethyl-1,4-phenylenediamine + anthranilate + 2 NAD(+) = 2-(4-dimethylaminophenyl)diazenylbenzoate + 2 NADH + 2 H(+). In terms of biological role, quinone reductase that provides resistance to thiol-specific stress caused by electrophilic quinones. Also exhibits azoreductase activity. Catalyzes the reductive cleavage of the azo bond in aromatic azo compounds to the corresponding amines. The chain is FMN-dependent NADH:quinone oxidoreductase 2 from Bacillus anthracis.